Consider the following 590-residue polypeptide: Myo-inositol transporter 3C (590 aa).

Residues 1 to 63 (MSRTPSSLDK…GEDKVTPYLC (63 aa)) lie on the Cytoplasmic side of the membrane. The chain crosses the membrane as a helical span at residues 64 to 86 (FLISASAIAGFLFGYDTGVVGVA). At 87–105 (LPLVGTDLGGSVLSSSQQE) the chain is on the extracellular side. Residues 106-126 (IITAGTTIGAIFGSAILGGWG) form a helical membrane-spanning segment. At 127–132 (DRLGRK) the chain is on the cytoplasmic side. A helical membrane pass occupies residues 133–153 (VAILIADVFFTVGAVLIAASY). Topologically, residues 154–162 (SVPQMIVGR) are extracellular. A helical transmembrane segment spans residues 163–183 (IVLGVGVGGAAAIAPLFITET). Residues 184–192 (APTAVRGRC) lie on the Cytoplasmic side of the membrane. A helical membrane pass occupies residues 193 to 213 (IGVNAFFIPFGQVISEAIGAG). Residues 214-222 (VQDMKNGWR) are Extracellular-facing. A helical transmembrane segment spans residues 223-243 (LLFALGAVPSLFQLILFHYLP). Residues 244–325 (ESPRILILRG…TVSLIQMAGQ (82 aa)) are Cytoplasmic-facing. A helical membrane pass occupies residues 326–346 (LSGFNTLLYYAGTLFSLLGLT). At 347–349 (NPA) the chain is on the extracellular side. Residues 350–370 (LGGLIPAGTNAFFVLVGMTLV) traverse the membrane as a helical segment. Over 371-376 (DKVGRR) the chain is Cytoplasmic. A helical membrane pass occupies residues 377–397 (GLLMFGVPIMLAGLVWNIVAF). At 398 to 417 (HYLCIPTGGLLDTSYKYDTK) the chain is on the extracellular side. The chain crosses the membrane as a helical span at residues 418 to 438 (LVGIVIGGIVFFTTGFGLTYS). Topologically, residues 439 to 454 (HLAWYQSEFLALEVRS) are cytoplasmic. A helical membrane pass occupies residues 455 to 475 (VGSGIATTANWVANLVVSVSY). Topologically, residues 476–485 (LTELETLTPS) are extracellular. Residues 486–506 (GTYGLYLGFSVVFFIFAVFCY) traverse the membrane as a helical segment. Topologically, residues 507 to 590 (PETKQLSIDE…NGAKRFPISR (84 aa)) are cytoplasmic.

It belongs to the major facilitator superfamily. Sugar transporter (TC 2.A.1.1) family.

The protein resides in the cell membrane. The enzyme catalyses myo-inositol(out) + H(+)(out) = myo-inositol(in) + H(+)(in). Its function is as follows. Major transporter for myo-inositol. Plays a role in the traversal of the host blood-brain barrier. This is Myo-inositol transporter 3C from Cryptococcus neoformans var. grubii serotype A (strain H99 / ATCC 208821 / CBS 10515 / FGSC 9487) (Filobasidiella neoformans var. grubii).